Here is a 107-residue protein sequence, read N- to C-terminus: Nucleoid-associated protein Msil_0275 (107 aa).

The protein belongs to the YbaB/EbfC family. Homodimer.

The protein localises to the cytoplasm. Its subcellular location is the nucleoid. In terms of biological role, binds to DNA and alters its conformation. May be involved in regulation of gene expression, nucleoid organization and DNA protection. This Methylocella silvestris (strain DSM 15510 / CIP 108128 / LMG 27833 / NCIMB 13906 / BL2) protein is Nucleoid-associated protein Msil_0275.